The chain runs to 352 residues: MTNTPSSAPSPLTYRDAGVDIDAGNALVERIKPLVKRSFRPEVMGGLGGFGALFDLSNKYREPVLVSGTDGVGTKLKLAHQLNRHDTIGIDLVAMCVNDVLVQGAEPLFFLDYFATGKLDIDTAAAVVGGIANGCTEAGCALIGGETAEMPDMYAPGEYDLAGFTVAAVEKSELKDGASVAAGDVLIGIASSGPHSNGYSLVRRIYDRAGRPADLELEGGVKLVDALMAPTRLYVKPILSLLKSHGEAIHGMAHITGGGLTENIIRVVPDGLGLDIQASSWTLPPVFQWLQKEGAVADSEMWRTFNCGIGFVLIVAADQVAAVSDAVKAQGLEHWTIGQVVTAEGAERVHIG.

Belongs to the AIR synthase family.

Its subcellular location is the cytoplasm. It carries out the reaction 2-formamido-N(1)-(5-O-phospho-beta-D-ribosyl)acetamidine + ATP = 5-amino-1-(5-phospho-beta-D-ribosyl)imidazole + ADP + phosphate + H(+). Its pathway is purine metabolism; IMP biosynthesis via de novo pathway; 5-amino-1-(5-phospho-D-ribosyl)imidazole from N(2)-formyl-N(1)-(5-phospho-D-ribosyl)glycinamide: step 2/2. The protein is Phosphoribosylformylglycinamidine cyclo-ligase of Stenotrophomonas maltophilia (strain K279a).